Here is a 457-residue protein sequence, read N- to C-terminus: Phenylalanine-4-hydroxylase (457 aa).

Residues 31-108 (TIVFTLREKA…EKKVLVQDWN (78 aa)) form the ACT domain. Fe cation is bound by residues His285, His290, and Glu330.

This sequence belongs to the biopterin-dependent aromatic amino acid hydroxylase family. Homotetramer. The cofactor is Fe(2+). Expressed in the seam cells of the lateral hypodermis, in the ventral hypodermis and in the hyp7 hypodermal syncytium, in hypodermal cells in the tail and in body wall muscle cells (at protein level).

It is found in the cytoplasm. The enzyme catalyses (6R)-L-erythro-5,6,7,8-tetrahydrobiopterin + L-phenylalanine + O2 = (4aS,6R)-4a-hydroxy-L-erythro-5,6,7,8-tetrahydrobiopterin + L-tyrosine. It carries out the reaction (6R)-L-erythro-5,6,7,8-tetrahydrobiopterin + L-tryptophan + O2 = 5-hydroxy-L-tryptophan + (4aS,6R)-4a-hydroxy-L-erythro-5,6,7,8-tetrahydrobiopterin. Its pathway is amino-acid degradation; L-phenylalanine degradation; acetoacetate and fumarate from L-phenylalanine: step 1/6. With respect to regulation, inhibited by tetrahydrobiopterin. Unlike its mammalian orthologs, pah-1 does not exhibit allosteric binding behavior for phenylalanine. Catalyzes the hydroxylation of L-phenylalanine to L-tyrosine. Catalyzes the hydroxylation of tryptophan to 5-hydroxy-L-tryptophan. Plays a role in the biosynthesis of a melanin-like cuticle pigment. The protein is Phenylalanine-4-hydroxylase of Caenorhabditis elegans.